We begin with the raw amino-acid sequence, 585 residues long: UvrABC system protein C (585 aa).

A GIY-YIG domain is found at 15–90; sequence AEPGVYQFLE…IKRHQPRYNV (76 aa). In terms of domain architecture, UVR spans 198–233; that stretch reads GILADPLRQEMQAAATAEEFERAANIRDRLAVIESF.

The protein belongs to the UvrC family. As to quaternary structure, interacts with UvrB in an incision complex.

It localises to the cytoplasm. Functionally, the UvrABC repair system catalyzes the recognition and processing of DNA lesions. UvrC both incises the 5' and 3' sides of the lesion. The N-terminal half is responsible for the 3' incision and the C-terminal half is responsible for the 5' incision. The sequence is that of UvrABC system protein C from Haloquadratum walsbyi (strain DSM 16790 / HBSQ001).